A 239-amino-acid polypeptide reads, in one-letter code: THAP domain-containing protein 3 (239 aa).

Residues 1-82 form a THAP-type zinc finger; the sequence is MPKSCAARQC…LKHNAVPTVF (82 aa). 2 disordered regions span residues 88 to 125 and 139 to 174; these read PQLV…LGRK and VGGL…PTQP. The HCFC1-binding motif (HBM) motif lies at 176-179; that stretch reads DHSY.

In terms of assembly, component of a THAP1/THAP3-HCFC1-OGT complex that contains at least, either THAP1 or THAP3, HCFC1 and OGT. Interacts directly with OGT and HCFC1 (via its HBM).

Functionally, component of a THAP1/THAP3-HCFC1-OGT complex that is required for the regulation of the transcriptional activity of RRM1. In Bos taurus (Bovine), this protein is THAP domain-containing protein 3 (THAP3).